The chain runs to 271 residues: Urease accessory protein UreD (271 aa).

It belongs to the UreD family. In terms of assembly, ureD, UreF and UreG form a complex that acts as a GTP-hydrolysis-dependent molecular chaperone, activating the urease apoprotein by helping to assemble the nickel containing metallocenter of UreC. The UreE protein probably delivers the nickel.

It is found in the cytoplasm. In terms of biological role, required for maturation of urease via the functional incorporation of the urease nickel metallocenter. The chain is Urease accessory protein UreD from Haemophilus influenzae (strain PittEE).